The following is a 638-amino-acid chain: ATP-dependent zinc metalloprotease FtsH (638 aa).

At 1–7 the chain is on the cytoplasmic side; it reads MRSTYKT. The helical transmembrane segment at 8 to 28 threads the bilayer; sequence IGLWVILIVLFVAFYNFFSQG. The Periplasmic segment spans residues 29–102; the sequence is NDQVQEPSFT…KYEREEQNSL (74 aa). A helical membrane pass occupies residues 103 to 123; the sequence is WLTILGQWMPVVFLFLFFIFF. Over 124 to 638 the chain is Cytoplasmic; it reads MRQLQGGSGK…GLPAMEPKKA (515 aa). 195 to 202 serves as a coordination point for ATP; that stretch reads GSPGTGKT. Residue histidine 417 coordinates Zn(2+). The active site involves glutamate 418. Residues histidine 421 and aspartate 493 each contribute to the Zn(2+) site. Residues 596–638 are disordered; that stretch reads GGQLTRERPPPRVNAPPKATEKKDKRKILDALEGLPAMEPKKA. The segment covering 614–625 has biased composition (basic and acidic residues); the sequence is ATEKKDKRKILD.

It in the central section; belongs to the AAA ATPase family. The protein in the C-terminal section; belongs to the peptidase M41 family. Homohexamer. Zn(2+) serves as cofactor.

Its subcellular location is the cell inner membrane. Its function is as follows. Acts as a processive, ATP-dependent zinc metallopeptidase for both cytoplasmic and membrane proteins. Plays a role in the quality control of integral membrane proteins. This chain is ATP-dependent zinc metalloprotease FtsH, found in Myxococcus xanthus (strain DK1622).